Here is a 322-residue protein sequence, read N- to C-terminus: UV DNA damage endonuclease (322 aa).

It belongs to the uve1/UvsE family.

Functionally, component in a DNA repair pathway. Removal of UV LIGHT damaged nucleotides. Recognizes pyrimidine dimers and cleave a phosphodiester bond immediately 5' to the lesion. The chain is UV DNA damage endonuclease from Nostoc sp. (strain PCC 7120 / SAG 25.82 / UTEX 2576).